Here is a 201-residue protein sequence, read N- to C-terminus: Adenylyl-sulfate kinase (201 aa).

Residue 35-42 (GLSGSGKS) coordinates ATP. Ser109 acts as the Phosphoserine intermediate in catalysis.

Belongs to the APS kinase family.

It catalyses the reaction adenosine 5'-phosphosulfate + ATP = 3'-phosphoadenylyl sulfate + ADP + H(+). Its pathway is sulfur metabolism; hydrogen sulfide biosynthesis; sulfite from sulfate: step 2/3. Functionally, catalyzes the synthesis of activated sulfate. The chain is Adenylyl-sulfate kinase from Prochlorococcus marinus (strain SARG / CCMP1375 / SS120).